A 737-amino-acid polypeptide reads, in one-letter code: Relaxin receptor 2 (737 aa).

The Extracellular segment spans residues 1–399; it reads MFPLLHFIVL…SSFEDLLANN (399 aa). Positions 27 to 64 constitute an LDL-receptor class A domain; sequence LCQKGYFPCGNLTKCLPRAFHCDGVDDCGNGADEDNCG. 3 cysteine pairs are disulfide-bonded: Cys-28/Cys-41, Cys-35/Cys-54, and Cys-48/Cys-63. Asn-37 carries N-linked (GlcNAc...) asparagine glycosylation. N-linked (GlcNAc...) asparagine glycosylation occurs at Asn-121. LRR repeat units follow at residues 121–142, 145–166, 169–190, 193–214, 217–238, 241–262, 265–286, 289–310, 313–334, and 337–358; these read NTTLLSLKKNKIHSLPDKVFTK, QLKQIFLQHNCITHISRKAFFG, NLQILYLSHNCITTLRPGVFKD, QLTWLILDDNPITRISQQLFTG, SLFFLSMVNNYLEALPKQMCAQ, QLNWMDLEGNGIKYLTNSSFLS, SLTVLFLPRNQIDFVPEKTFSS, NLGELDLSSNMIMELPPEIFKD, LLQKLNLSSNPLLYLHKNQFES, and QLQSLDLERIEIPNINTRMFQP. N-linked (GlcNAc...) asparagine glycosylation occurs at Asn-257. Asn-318 carries an N-linked (GlcNAc...) asparagine glycan. N-linked (GlcNAc...) asparagine glycosylation occurs at Asn-361. Residues 400–420 form a helical membrane-spanning segment; that stretch reads ILRIFVWVIAFITCFGNLFVI. Topologically, residues 421–438 are cytoplasmic; that stretch reads GMRSFIKAENTTHATSIK. The helical transmembrane segment at 439–459 threads the bilayer; sequence ILCCADCLMGVYLFFIGFFDI. Topologically, residues 460–478 are extracellular; sequence KYRGQYQKYALLWMESLQC. A disulfide bridge connects residues Cys-478 and Cys-556. The helical transmembrane segment at 479–501 threads the bilayer; the sequence is RLMGFLAMLSTEVSVLLLTYLTL. Topologically, residues 502 to 520 are cytoplasmic; sequence EKFLAIVFPFSNIRPGKWQ. A helical transmembrane segment spans residues 521 to 541; sequence TMVILICIWIVGFLIAVIPFW. Residues 542 to 575 lie on the Extracellular side of the membrane; that stretch reads KEDYFGNFYGKNGVCFPLYYDQTEDIGSKGYSLG. Residues 576–596 form a helical membrane-spanning segment; it reads IFLGVNLLAFLIIVFSYTIMF. Topologically, residues 597–622 are cytoplasmic; sequence CSIKKTALQTSEVRNPIGREVAVANR. Residues 623–643 traverse the membrane as a helical segment; the sequence is FFFIVFSDAICWIPVFVIKIL. Topologically, residues 644–653 are extracellular; sequence SLFRVEIPGT. The helical transmembrane segment at 654–674 threads the bilayer; that stretch reads ITSWIVIFFLPVNSALNPILY. At 675-737 the chain is on the cytoplasmic side; it reads TLTTSFFKDK…LGDSIVKPIS (63 aa).

It belongs to the G-protein coupled receptor 1 family.

It is found in the cell membrane. Receptor for relaxin. The activity of this receptor is mediated by G proteins leading to stimulation of adenylate cyclase and an increase of cAMP. May also be a receptor for Leydig insulin-like peptide (INSL3). The chain is Relaxin receptor 2 (RXFP2) from Canis lupus familiaris (Dog).